Reading from the N-terminus, the 102-residue chain is ATP-dependent Clp protease adapter protein ClpS (102 aa).

The protein belongs to the ClpS family. In terms of assembly, binds to the N-terminal domain of the chaperone ClpA.

In terms of biological role, involved in the modulation of the specificity of the ClpAP-mediated ATP-dependent protein degradation. The chain is ATP-dependent Clp protease adapter protein ClpS from Shewanella loihica (strain ATCC BAA-1088 / PV-4).